Consider the following 283-residue polypeptide: Pantothenate synthetase (283 aa).

30–37 is an ATP binding site; the sequence is MGNLHAGH. H37 (proton donor) is an active-site residue. Q61 contributes to the (R)-pantoate binding site. A beta-alanine-binding site is contributed by Q61. 149–152 is an ATP binding site; sequence GRKD. Q155 lines the (R)-pantoate pocket. 186-189 lines the ATP pocket; that stretch reads LSSR.

Belongs to the pantothenate synthetase family. As to quaternary structure, homodimer.

It localises to the cytoplasm. The catalysed reaction is (R)-pantoate + beta-alanine + ATP = (R)-pantothenate + AMP + diphosphate + H(+). It functions in the pathway cofactor biosynthesis; (R)-pantothenate biosynthesis; (R)-pantothenate from (R)-pantoate and beta-alanine: step 1/1. Its function is as follows. Catalyzes the condensation of pantoate with beta-alanine in an ATP-dependent reaction via a pantoyl-adenylate intermediate. The polypeptide is Pantothenate synthetase (Chromohalobacter salexigens (strain ATCC BAA-138 / DSM 3043 / CIP 106854 / NCIMB 13768 / 1H11)).